The sequence spans 200 residues: Probable nicotinate-nucleotide adenylyltransferase (200 aa).

The protein belongs to the NadD family.

The enzyme catalyses nicotinate beta-D-ribonucleotide + ATP + H(+) = deamido-NAD(+) + diphosphate. It participates in cofactor biosynthesis; NAD(+) biosynthesis; deamido-NAD(+) from nicotinate D-ribonucleotide: step 1/1. Catalyzes the reversible adenylation of nicotinate mononucleotide (NaMN) to nicotinic acid adenine dinucleotide (NaAD). In Leifsonia xyli subsp. xyli (strain CTCB07), this protein is Probable nicotinate-nucleotide adenylyltransferase.